The chain runs to 671 residues: Kinesin-like protein KIF2C (671 aa).

Residues 1–200 (MIDFDDVAAI…CHPLTMTDPI (200 aa)) are globular. Residues 36-62 (KQKRRSVNSKIPAPKESLRTRSTRMST) are disordered. Ser-41 bears the Phosphoserine; by AURKB mark. The short motif at 44–47 (SKIP) is the Microtubule tip localization signal element. A phosphoserine mark is found at Ser-52, Ser-57, Ser-61, Ser-112, Ser-121, Ser-133, and Ser-138. A negative regulator of microtubule-binding region spans residues 153-184 (EKKAQNSEMRMKRAQEYDSSFPNWEFARMIKE). Disulfide bonds link Cys-191–Cys-233 and Cys-290–Cys-506. The region spanning 204 to 534 (RICVCVRKRP…LRYADRVKEL (331 aa)) is the Kinesin motor domain. Residue 294 to 301 (GQTGSGKT) participates in ATP binding. Phosphoserine is present on residues Ser-465, Ser-567, and Ser-579. Residues 564-604 (GNLSKEEEELSSQMSSFNEAMTQIRELEERAVEELKEIIQQ) adopt a coiled-coil conformation.

It belongs to the TRAFAC class myosin-kinesin ATPase superfamily. Kinesin family. MCAK/KIF2 subfamily. As to quaternary structure, interacts with CENPH. Interacts with MTUS2/TIP150; the interaction is direct. Interacts with MAPRE1; the interaction is direct, regulated by phosphorylation and is probably required for targeting to growing microtubule plus ends. Interacts with KIF18B at microtubule tips; this interaction increases the affinity of both partners for microtubule plus ends and is required for robust microtubule depolymerization. Phosphorylation by AURKA or AURKB strongly reduces KIF18B-binding. Post-translationally, phosphorylation by AURKB, regulates association with centromeres and kinetochores and the microtubule depolymerization activity. Ubiquitinated.

The protein localises to the cytoplasm. Its subcellular location is the cytoskeleton. It localises to the nucleus. The protein resides in the chromosome. It is found in the centromere. The protein localises to the kinetochore. In terms of biological role, in complex with KIF18B, constitutes the major microtubule plus-end depolymerizing activity in mitotic cells. Regulates the turnover of microtubules at the kinetochore and functions in chromosome segregation during mitosis. Plays a role in chromosome congression and is required for the lateral to end-on conversion of the chromosome-microtubule attachment. This Macaca fascicularis (Crab-eating macaque) protein is Kinesin-like protein KIF2C (KIF2C).